Here is a 250-residue protein sequence, read N- to C-terminus: 2,3-bisphosphoglycerate-dependent phosphoglycerate mutase (250 aa).

Substrate is bound by residues 10–17 (RHGESQWN), 23–24 (TG), Arg-62, 89–92 (ERHY), Lys-100, 116–117 (RR), and 185–186 (GN). The active-site Tele-phosphohistidine intermediate is the His-11. The active-site Proton donor/acceptor is the Glu-89.

Belongs to the phosphoglycerate mutase family. BPG-dependent PGAM subfamily. Homodimer.

The catalysed reaction is (2R)-2-phosphoglycerate = (2R)-3-phosphoglycerate. It participates in carbohydrate degradation; glycolysis; pyruvate from D-glyceraldehyde 3-phosphate: step 3/5. Its function is as follows. Catalyzes the interconversion of 2-phosphoglycerate and 3-phosphoglycerate. The chain is 2,3-bisphosphoglycerate-dependent phosphoglycerate mutase from Serratia proteamaculans (strain 568).